We begin with the raw amino-acid sequence, 404 residues long: Cysteine desulfurase IscS (404 aa).

Pyridoxal 5'-phosphate contacts are provided by residues 75–76 (AT), Asn155, Gln183, and 203–205 (SSH). At Lys206 the chain carries N6-(pyridoxal phosphate)lysine. A pyridoxal 5'-phosphate-binding site is contributed by Thr243. Cys328 acts as the Cysteine persulfide intermediate in catalysis. Cys328 is a binding site for [2Fe-2S] cluster.

It belongs to the class-V pyridoxal-phosphate-dependent aminotransferase family. NifS/IscS subfamily. Homodimer. Forms a heterotetramer with IscU, interacts with other sulfur acceptors. It depends on pyridoxal 5'-phosphate as a cofactor.

It is found in the cytoplasm. It catalyses the reaction (sulfur carrier)-H + L-cysteine = (sulfur carrier)-SH + L-alanine. Its pathway is cofactor biosynthesis; iron-sulfur cluster biosynthesis. Master enzyme that delivers sulfur to a number of partners involved in Fe-S cluster assembly, tRNA modification or cofactor biosynthesis. Catalyzes the removal of elemental sulfur atoms from cysteine to produce alanine. Functions as a sulfur delivery protein for Fe-S cluster synthesis onto IscU, an Fe-S scaffold assembly protein, as well as other S acceptor proteins. The polypeptide is Cysteine desulfurase IscS (Histophilus somni (strain 129Pt) (Haemophilus somnus)).